We begin with the raw amino-acid sequence, 188 residues long: dCTP deaminase (188 aa).

DCTP-binding positions include 111 to 116 (KSTYAR), 135 to 137 (TLE), Gln-156, Tyr-170, and Gln-180. Glu-137 acts as the Proton donor/acceptor in catalysis.

It belongs to the dCTP deaminase family. In terms of assembly, homotrimer.

The enzyme catalyses dCTP + H2O + H(+) = dUTP + NH4(+). Its pathway is pyrimidine metabolism; dUMP biosynthesis; dUMP from dCTP (dUTP route): step 1/2. Catalyzes the deamination of dCTP to dUTP. The chain is dCTP deaminase from Azoarcus sp. (strain BH72).